The chain runs to 409 residues: Serine/threonine transporter SstT (409 aa).

The next 9 membrane-spanning stretches (helical) occupy residues 17–37 (LVVQIIVGLVAGLLLASFFPA), 49–69 (FVSALKAVAPVLVFVLVMASI), 83–103 (ILLLYLVGTFSAAVVAVIASF), 142–162 (ALISANFIGILAWAIGLGIAF), 180–200 (VSLIVKVVIRFAPLGIFGLVA), 218–238 (LVVLLGCMLFVAFVVNPLIVF), 299–319 (MAGAAITITVLTLAAVHTLGI), 331–351 (VVASVCACGASGVAGGSLLLI), and 357–377 (LFGIPSEVAMQVVAVGFIIAI).

Belongs to the dicarboxylate/amino acid:cation symporter (DAACS) (TC 2.A.23) family.

Its subcellular location is the cell inner membrane. It carries out the reaction L-serine(in) + Na(+)(in) = L-serine(out) + Na(+)(out). It catalyses the reaction L-threonine(in) + Na(+)(in) = L-threonine(out) + Na(+)(out). Its function is as follows. Involved in the import of serine and threonine into the cell, with the concomitant import of sodium (symport system). This is Serine/threonine transporter SstT from Pseudomonas paraeruginosa (strain DSM 24068 / PA7) (Pseudomonas aeruginosa (strain PA7)).